The following is a 105-amino-acid chain: 5,5'-dehydrodivanillate O-demethylase ferredoxin subunit (105 aa).

Residues 2–105 (AQLKVVTRDG…GMTVTIAPED (104 aa)) form the 2Fe-2S ferredoxin-type domain. C40, C46, C49, and C86 together coordinate [2Fe-2S] cluster.

Belongs to the adrenodoxin/putidaredoxin family. Monomer. The three-component monooxygenase is composed of an oxygenase (LigXa), a ferredoxin (LigXc) and a ferredoxin reductase (LigXd). It depends on [2Fe-2S] cluster as a cofactor.

The enzyme catalyses 5,5'-dehydrodivanillate + NADH + O2 + H(+) = 2,2',3-trihydroxy-3'-methoxy-5,5'-dicarboxybiphenyl + formaldehyde + NAD(+) + H2O. Involved in the catabolism of 5,5'-dehydrodivanillate (DDVA), an intermediate in the biodegradation of lignin. Part of a three-component monooxygenase that catalyzes the O-demethylation of DDVA, leading to the formation of 2,2',3-trihydroxy-3'-methoxy-5,5'-dicarboxybiphenyl (OH-DDVA). LigXc probably functions as an intermediate electron transfer protein between LigXd and LigXa. The sequence is that of 5,5'-dehydrodivanillate O-demethylase ferredoxin subunit from Sphingobium sp. (strain NBRC 103272 / SYK-6).